The sequence spans 522 residues: Na(+)/H(+) antiporter NhaB (522 aa).

11 helical membrane passes run 25–45, 49–69, 87–107, 128–162, 201–221, 237–257, 302–322, 356–376, 388–408, 446–466, and 476–496; these read VFLVINPFIFWFHPFIAGWLL, FIFTLAMALKCYPLQPGGMLA, ILANFEVILLLMFMVAGIYFM, LSLAFCLTAAFLSAFLDALTVIAVIISVAMGFYGV, LMMHAAVGTALGGVMTLVGEP, FFFRMSPVTLLTLISGVVTCI, VFVGIWLIIGLAFHLASVGLI, LVVFFSVVAVIIDQHLFAPVI, LLLFYIFNGVLSAISDNVFVA, ATPNGQAAFLFLLTSSISPLI, and MALPYTIVLSIVGLLAVEYVL.

This sequence belongs to the NhaB Na(+)/H(+) (TC 2.A.34) antiporter family.

Its subcellular location is the cell inner membrane. The catalysed reaction is 2 Na(+)(in) + 3 H(+)(out) = 2 Na(+)(out) + 3 H(+)(in). Functionally, na(+)/H(+) antiporter that extrudes sodium in exchange for external protons. The sequence is that of Na(+)/H(+) antiporter NhaB from Actinobacillus succinogenes (strain ATCC 55618 / DSM 22257 / CCUG 43843 / 130Z).